Consider the following 838-residue polypeptide: Envelope glycoprotein H (838 aa).

A signal peptide spans M1–G18. The Virion surface portion of the chain corresponds to Q19–P803. 2 N-linked (GlcNAc...) asparagine; by host glycosylation sites follow: N73 and N120. A disordered region spans residues F174–H204. N216 carries N-linked (GlcNAc...) asparagine; by host glycosylation. The segment at D259 to V323 is interaction with gL. N-linked (GlcNAc...) asparagine; by host glycosylation is found at N332, N437, N670, and N784. A helical membrane pass occupies residues G804 to L824. At K825–E838 the chain is on the intravirion side.

The protein belongs to the herpesviridae glycoprotein H family. As to quaternary structure, interacts with glycoprotein L (gL); this interaction is necessary for the correct processing and cell surface expression of gH. The heterodimer gH/gL seems to interact with gB trimers during fusion. Associates with the gB-gH/gL-gD complex. Interacts with VP16. In terms of processing, N-glycosylated, O-glycosylated, and sialylated.

It localises to the virion membrane. The protein resides in the host cell membrane. Its subcellular location is the host endosome membrane. In terms of biological role, the heterodimer glycoprotein H-glycoprotein L is required for the fusion of viral and plasma membranes leading to virus entry into the host cell. Following initial binding to host receptor, membrane fusion is mediated by the fusion machinery composed of gB and the heterodimer gH/gL. May also be involved in the fusion between the virion envelope and the outer nuclear membrane during virion morphogenesis. The polypeptide is Envelope glycoprotein H (Human herpesvirus 1 (strain 17) (HHV-1)).